Reading from the N-terminus, the 1173-residue chain is Rac guanine nucleotide exchange factor JJ (1173 aa).

3 disordered regions span residues Met-1–Gln-380, Lys-458–Met-479, and Asp-712–Gln-765. Composition is skewed to low complexity over residues Gln-8–Gln-23 and Gln-35–Pro-45. Over residues Thr-50–Gly-62 the composition is skewed to polar residues. 2 stretches are compositionally biased toward low complexity: residues Thr-72 to Gln-82 and Gln-98 to Tyr-118. A compositionally biased stretch (polar residues) spans Ser-119–Tyr-133. Composition is skewed to low complexity over residues Thr-134–Thr-143, Ser-153–Asn-191, and Ser-208–Ser-219. The segment covering Tyr-220–Gln-239 has biased composition (polar residues). Residues Pro-240–Thr-258 show a composition bias toward low complexity. Basic and acidic residues predominate over residues Ser-262–Ile-277. Positions Thr-280–Asn-295 are enriched in polar residues. The span at Gln-296–Gln-380 shows a compositional bias: low complexity. Residues Lys-470–Met-479 are compositionally biased toward basic and acidic residues. Residues Gln-743–Gln-765 are compositionally biased toward low complexity. An IQ domain is found at Arg-793–Leu-822. Positions Asn-833 to Arg-1016 constitute a DH domain. One can recognise a PH domain in the interval Arg-1044–Lys-1146.

In terms of biological role, GTPase-activating protein. The protein is Rac guanine nucleotide exchange factor JJ (gxcJJ) of Dictyostelium discoideum (Social amoeba).